A 66-amino-acid polypeptide reads, in one-letter code: Large ribosomal subunit protein uL29 (66 aa).

It belongs to the universal ribosomal protein uL29 family.

In Caldanaerobacter subterraneus subsp. tengcongensis (strain DSM 15242 / JCM 11007 / NBRC 100824 / MB4) (Thermoanaerobacter tengcongensis), this protein is Large ribosomal subunit protein uL29.